The primary structure comprises 326 residues: Apoptosis facilitator Bcl-2-like protein 14 (326 aa).

Residue S44 is modified to Phosphoserine. A disordered region spans residues 99–127 (TEKEEEPPSSPKEIHAQGPFPVERQGRNQ). A BH3 motif is present at residues 211-225 (IVELLKYSGDQLGRE). The BH2 signature appears at 307–314 (WVQQNGGW).

This sequence belongs to the Bcl-2 family. Post-translationally, phosphorylated by MELK, leading to inhibit its pro-apoptotic function.

Its subcellular location is the cytoplasm. Functionally, plays a role in apoptosis. The protein is Apoptosis facilitator Bcl-2-like protein 14 (Bcl2l14) of Rattus norvegicus (Rat).